The chain runs to 191 residues: Calcium-binding protein CML42 (191 aa).

3 consecutive EF-hand domains span residues 25–60 (LNAL…LGLN), 116–151 (ENES…LGLP), and 154–189 (GEME…VVIP). Residues Asp-38, Asn-40, Asp-42, Glu-49, Asp-129, Asn-131, Asp-133, Glu-140, Asp-167, Asn-169, Asp-171, Arg-173, and Glu-178 each coordinate Ca(2+).

As to quaternary structure, interacts with KIC. Expressed in seedling shoots, roots, rosette leaves and flowers. Expressed in the leaf trichome support cells.

In terms of biological role, probable calcium sensor that binds calcium in vitro. Involved in the regulation of trichome branching. This is Calcium-binding protein CML42 (CML42) from Arabidopsis thaliana (Mouse-ear cress).